Here is a 346-residue protein sequence, read N- to C-terminus: MSEPARLISPEKRGEDLDITLRPQSLDEFTGQAEARANLKVFIEAAKNRGEALDHVLFVGPPGLGKTTLAQIMAKELGVNFRSTSGPVIAKAGDLAALLTNLEERDVLFIDEIHRLNPAVEEILYPAMEDYQLDLIIGEGPAARSVKIDLSKFTLVAATTRLGLLTTPLRDRFGIPVRLTFYTVEELELIVRRGARLMNLPMTEEGAREIARRARGTPRIAGRLLRRVRDFAEVARAEAVTREIADEALTRLLVDNVGFDQLDKRYLNMIAVNFGGGPVGIETIAAGLSEPRDAIEDIIEPYMIQQGFIQRTPRGRVLTAIAWKHLGMQPPKEMEAAQFRLFQEDD.

Positions 1–182 (MSEPARLISP…FGIPVRLTFY (182 aa)) are large ATPase domain (RuvB-L). ATP contacts are provided by residues Leu21, Arg22, Gly63, Lys66, Thr67, Thr68, 129 to 131 (EDY), Arg172, Tyr182, and Arg219. Thr67 contributes to the Mg(2+) binding site. Residues 183-253 (TVEELELIVR…IADEALTRLL (71 aa)) are small ATPAse domain (RuvB-S). The tract at residues 256–346 (NVGFDQLDKR…AQFRLFQEDD (91 aa)) is head domain (RuvB-H). 3 residues coordinate DNA: Arg292, Arg311, and Arg316.

The protein belongs to the RuvB family. In terms of assembly, homohexamer. Forms an RuvA(8)-RuvB(12)-Holliday junction (HJ) complex. HJ DNA is sandwiched between 2 RuvA tetramers; dsDNA enters through RuvA and exits via RuvB. An RuvB hexamer assembles on each DNA strand where it exits the tetramer. Each RuvB hexamer is contacted by two RuvA subunits (via domain III) on 2 adjacent RuvB subunits; this complex drives branch migration. In the full resolvosome a probable DNA-RuvA(4)-RuvB(12)-RuvC(2) complex forms which resolves the HJ.

It is found in the cytoplasm. It carries out the reaction ATP + H2O = ADP + phosphate + H(+). Functionally, the RuvA-RuvB-RuvC complex processes Holliday junction (HJ) DNA during genetic recombination and DNA repair, while the RuvA-RuvB complex plays an important role in the rescue of blocked DNA replication forks via replication fork reversal (RFR). RuvA specifically binds to HJ cruciform DNA, conferring on it an open structure. The RuvB hexamer acts as an ATP-dependent pump, pulling dsDNA into and through the RuvAB complex. RuvB forms 2 homohexamers on either side of HJ DNA bound by 1 or 2 RuvA tetramers; 4 subunits per hexamer contact DNA at a time. Coordinated motions by a converter formed by DNA-disengaged RuvB subunits stimulates ATP hydrolysis and nucleotide exchange. Immobilization of the converter enables RuvB to convert the ATP-contained energy into a lever motion, pulling 2 nucleotides of DNA out of the RuvA tetramer per ATP hydrolyzed, thus driving DNA branch migration. The RuvB motors rotate together with the DNA substrate, which together with the progressing nucleotide cycle form the mechanistic basis for DNA recombination by continuous HJ branch migration. Branch migration allows RuvC to scan DNA until it finds its consensus sequence, where it cleaves and resolves cruciform DNA. The polypeptide is Holliday junction branch migration complex subunit RuvB (Rhizobium etli (strain ATCC 51251 / DSM 11541 / JCM 21823 / NBRC 15573 / CFN 42)).